Consider the following 93-residue polypeptide: UPF0728 protein C10orf53 (93 aa).

This sequence belongs to the UPF0728 family.

The protein is UPF0728 protein C10orf53 (C10orf53) of Homo sapiens (Human).